A 769-amino-acid polypeptide reads, in one-letter code: 3-O-beta-D-glucopyranosyl-beta-D-glucuronide phosphorylase (769 aa).

The active-site Proton donor is the Asp457.

It belongs to the glycosyl hydrolase 94 family. Homodimer.

The protein resides in the cytoplasm. It catalyses the reaction 3-O-beta-D-glucosyl-D-glucuronate + phosphate = aldehydo-D-glucuronate + alpha-D-glucose 1-phosphate. The catalysed reaction is a 3-O-beta-D-glucosyl-beta-D-glucuronoside + phosphate = a beta-D-glucuronoside + alpha-D-glucose 1-phosphate. Its function is as follows. Glycoside phosphorylase that catalyzes the reversible phosphorolysis of 3-O-beta-D-glucosyl-D-glucuronate into D-glucuronic acid and alpha-D-glucose 1-phosphate. Cannot phosphorolyze cellobionic acid and laminaribiose. In the reverse direction, using alpha-D-glucose 1-phosphate as a donor substrate, the enzyme acts on D-glucuronate and its artificial derivative p-nitrophenyl-beta-D-glucuronide. The apparent catalytic efficiency towards p-nitrophenyl-beta-D-glucuronide is approximately 5-fold higher than that towards D-glucuronic acid. Is probably involved in the metabolism of oligosaccharides containing the 3-O-beta-D-glucopyranosyl-beta-D-glucuronide structure released from bacterial and plant acidic carbohydrates. This is 3-O-beta-D-glucopyranosyl-beta-D-glucuronide phosphorylase from Paenibacillus borealis.